A 310-amino-acid polypeptide reads, in one-letter code: tRNA dimethylallyltransferase (310 aa).

Position 24 to 31 (G24 to T31) interacts with ATP. Position 26 to 31 (T26 to T31) interacts with substrate. Residues D49–Q52 are interaction with substrate tRNA.

It belongs to the IPP transferase family. As to quaternary structure, monomer. Mg(2+) serves as cofactor.

The enzyme catalyses adenosine(37) in tRNA + dimethylallyl diphosphate = N(6)-dimethylallyladenosine(37) in tRNA + diphosphate. Its function is as follows. Catalyzes the transfer of a dimethylallyl group onto the adenine at position 37 in tRNAs that read codons beginning with uridine, leading to the formation of N6-(dimethylallyl)adenosine (i(6)A). This chain is tRNA dimethylallyltransferase, found in Synechococcus sp. (strain CC9311).